A 180-amino-acid chain; its full sequence is Pro-glucagon (180 aa).

Positions M1 to Q20 are cleaved as a signal peptide. The disordered stretch occupies residues N25–T59. S54 carries the phosphoserine modification. A propeptide spanning residues N84–A89 is cleaved from the precursor. A phosphoserine mark is found at S105 and S108. R127 is modified (arginine amide). Residues D131–R145 constitute a propeptide that is removed on maturation. A phosphoserine mark is found at S150 and S152.

Belongs to the glucagon family. Proglucagon is post-translationally processed in a tissue-specific manner in pancreatic A cells and intestinal L cells. In pancreatic A cells, the major bioactive hormone is glucagon cleaved by PCSK2/PC2. In the intestinal L cells PCSK1/PC1 liberates GLP-1, GLP-2, glicentin and oxyntomodulin. GLP-1 is further N-terminally truncated by post-translational processing in the intestinal L cells resulting in GLP-1(7-37) GLP-1-(7-36)amide. The C-terminal amidation is neither important for the metabolism of GLP-1 nor for its effects on the endocrine pancreas. Glucagon is secreted in the A cells of the islets of Langerhans. GLP-1, GLP-2, oxyntomodulin and glicentin are secreted from enteroendocrine cells throughout the gastrointestinal tract. GLP-1 and GLP-2 are also secreted in selected neurons in the brain.

It localises to the secreted. Plays a key role in glucose metabolism and homeostasis. Regulates blood glucose by increasing gluconeogenesis and decreasing glycolysis. A counterregulatory hormone of insulin, raises plasma glucose levels in response to insulin-induced hypoglycemia. Plays an important role in initiating and maintaining hyperglycemic conditions in diabetes. Its function is as follows. Potent stimulator of glucose-dependent insulin release. Also stimulates insulin release in response to IL6. Plays important roles on gastric motility and the suppression of plasma glucagon levels. May be involved in the suppression of satiety and stimulation of glucose disposal in peripheral tissues, independent of the actions of insulin. Has growth-promoting activities on intestinal epithelium. May also regulate the hypothalamic pituitary axis (HPA) via effects on LH, TSH, CRH, oxytocin, and vasopressin secretion. Increases islet mass through stimulation of islet neogenesis and pancreatic beta cell proliferation. Inhibits beta cell apoptosis. In terms of biological role, stimulates intestinal growth and up-regulates villus height in the small intestine, concomitant with increased crypt cell proliferation and decreased enterocyte apoptosis. The gastrointestinal tract, from the stomach to the colon is the principal target for GLP-2 action. Plays a key role in nutrient homeostasis, enhancing nutrient assimilation through enhanced gastrointestinal function, as well as increasing nutrient disposal. Stimulates intestinal glucose transport and decreases mucosal permeability. Functionally, significantly reduces food intake. Inhibits gastric emptying in humans. Suppression of gastric emptying may lead to increased gastric distension, which may contribute to satiety by causing a sensation of fullness. May modulate gastric acid secretion and the gastro-pyloro-duodenal activity. May play an important role in intestinal mucosal growth in the early period of life. The protein is Pro-glucagon (GCG) of Sus scrofa (Pig).